Here is a 31-residue protein sequence, read N- to C-terminus: KCFEVGEFCGSPMLLGSLCCYPGWCFFVCVG.

Intrachain disulfides connect C2–C20, C9–C25, and C19–C29.

Belongs to the conotoxin O1 superfamily. Expressed by the venom duct.

It localises to the secreted. The sequence is that of Conotoxin pc6d from Conus pictus (Cone snail).